The following is a 361-amino-acid chain: Phospho-N-acetylmuramoyl-pentapeptide-transferase (361 aa).

The next 10 helical transmembrane spans lie at 25 to 45 (RAVL…PAVI), 73 to 93 (TMGG…WADL), 97 to 117 (YVWL…VDDW), 134 to 154 (YFWQ…TASL), 168 to 188 (ATFG…IVGA), 200 to 220 (GLAI…AYVA), 237 to 257 (AGEL…FLWF), 264 to 284 (VFMG…VAVV), 289 to 309 (IILF…MIQV), and 338 to 358 (QVVV…LSSL).

Belongs to the glycosyltransferase 4 family. MraY subfamily. Mg(2+) serves as cofactor.

The protein localises to the cell inner membrane. The catalysed reaction is UDP-N-acetyl-alpha-D-muramoyl-L-alanyl-gamma-D-glutamyl-meso-2,6-diaminopimeloyl-D-alanyl-D-alanine + di-trans,octa-cis-undecaprenyl phosphate = di-trans,octa-cis-undecaprenyl diphospho-N-acetyl-alpha-D-muramoyl-L-alanyl-D-glutamyl-meso-2,6-diaminopimeloyl-D-alanyl-D-alanine + UMP. It participates in cell wall biogenesis; peptidoglycan biosynthesis. Its function is as follows. Catalyzes the initial step of the lipid cycle reactions in the biosynthesis of the cell wall peptidoglycan: transfers peptidoglycan precursor phospho-MurNAc-pentapeptide from UDP-MurNAc-pentapeptide onto the lipid carrier undecaprenyl phosphate, yielding undecaprenyl-pyrophosphoryl-MurNAc-pentapeptide, known as lipid I. The protein is Phospho-N-acetylmuramoyl-pentapeptide-transferase of Thiobacillus denitrificans (strain ATCC 25259 / T1).